The chain runs to 126 residues: Chemocyanin (126 aa).

The signal sequence occupies residues 1-30 (MAQGSGSAERALVLGVVLVFLVFNCEVAES). The Phytocyanin domain maps to 31–126 (VVYTVGDGGG…GGLKIAVTAA (96 aa)). Residues His-69, Cys-109, and His-114 each contribute to the Cu cation site. Cys-82 and Cys-115 are oxidised to a cystine.

As to expression, strongly expressed in stigma and style and to a lesser extent in leaves, ovary and petals. Not detected in pollen tubes, mature anthers or roots.

Diffusible chemotropic factor that induces pollen tube chemotropism. The polypeptide is Chemocyanin (Lilium longiflorum (Trumpet lily)).